Here is a 2639-residue protein sequence, read N- to C-terminus: BAH and coiled-coil domain-containing protein 1 (2639 aa).

12 disordered regions span residues 23 to 49 (SAAAAARLAPAGPAAQPPAHFQPGKYF), 84 to 107 (SAASTHPSGPSSSPPEQAYRGSHP), 188 to 249 (APAH…GKER), 669 to 702 (FLSSKGPGQSERPDCARSREHDTTHGDGEVRQPP), 716 to 746 (VSRSEAAYGTNTARQGRAAPAFKGGGGPRST), 939 to 1047 (QRAA…QSTA), 1104 to 1331 (SDVH…HSSG), 1457 to 1513 (QREL…KKVK), 1582 to 1666 (KVKS…LGTE), 1722 to 1776 (EVKI…RDAL), 1868 to 1893 (FDDNSSFSEEEEDEEEEEEDSGPLSA), and 2057 to 2119 (KKVS…DHFL). Composition is skewed to low complexity over residues 24–41 (AAAAARLAPAGPAAQPPA) and 84–98 (SAASTHPSGPSSSPP). Composition is skewed to basic and acidic residues over residues 211–247 (GPKDFDRFLVGKELGREKAGKAAEGKERPAAEEDGGK) and 679–698 (ERPDCARSREHDTTHGDGEV). Lysine 222 carries the N6-acetyllysine modification. Basic and acidic residues predominate over residues 946-964 (RKPEDQHLDLEEPAQEKAP). Residues 972–988 (ALTPTAPGAPSPAAGPT) show a composition bias toward low complexity. The span at 989–1013 (KLPPCCHPPDPKPPASSPTPPPRPS) shows a compositional bias: pro residues. Positions 1106-1122 (VHSSNLEDPETMQTTAP) are enriched in polar residues. The span at 1182 to 1198 (LEGLQELQCAALLEAGG) shows a compositional bias: low complexity. A compositionally biased stretch (basic and acidic residues) spans 1212–1221 (AREERSREEG). Residues 1244 to 1275 (LEDEGEQPAPEEDELEEDELGQQSMEDSEEDC) are compositionally biased toward acidic residues. Pro residues predominate over residues 1307 to 1324 (DSPPDPQPPAASGPPSTV). Residues 1439-1473 (EVGMRVRLAELQRRYKEKQRELARLQRKHDHERDE) are a coiled coil. Residues 1457-1475 (QRELARLQRKHDHERDESS) show a composition bias toward basic and acidic residues. Residues 1478-1492 (PARRGPGRPRKRKHS) are compositionally biased toward basic residues. The segment covering 1751 to 1761 (GKKKAKGKAKG) has biased composition (basic residues). Residues 1868–1888 (FDDNSSFSEEEEDEEEEEEDS) show a composition bias toward acidic residues. Position 2274 is a phosphoserine (serine 2274). Disordered regions lie at residues 2317-2336 (SDCHSSFSDEDEDGPGLAAG), 2348-2383 (SSSSSGSSTSSSSGSVSTSSLCSSDNEDSSYSSDDE), and 2432-2472 (GAGS…ENRP). Residues 2348–2371 (SSSSSGSSTSSSSGSVSTSSLCSS) show a composition bias toward low complexity. Over residues 2372-2383 (DNEDSSYSSDDE) the composition is skewed to acidic residues. A compositionally biased stretch (low complexity) spans 2432 to 2442 (GAGSGPSSSSK). The 121-residue stretch at 2513 to 2633 (ETLRVGDCAV…PTTGRLVTAD (121 aa)) folds into the BAH domain.

The polypeptide is BAH and coiled-coil domain-containing protein 1 (Homo sapiens (Human)).